A 259-amino-acid chain; its full sequence is MNIKRRLKYLTSCLLVSAFFWINSSAWAGGPEIPPSAPWVIYLGGFGGIYVANFEYQGTYLGGSFTVPIGSNVHQNGYTAGGHIGLRYYFSNPWFLGLEFAAMGNSENATTAESVLAPSPDDLIFNLVNQFRIKSNLDLTAQLGVNITPQTRVYIKGGASYARIRHILTVFNPATLTPTISLQRTTHKNRWGFLVGFGLGYDFCPWFGIFTEYNYYDYGRVGLDSLSNIRPNNGADTYHQNVRVHAYSVLLGVNLNFSV.

The first 28 residues, 1 to 28 (MNIKRRLKYLTSCLLVSAFFWINSSAWA), serve as a signal peptide directing secretion. 2 consecutive transmembrane segments (helical) span residues 32 to 52 (EIPP…IYVA) and 191 to 211 (WGFL…GIFT).

It is found in the cell membrane. This is an uncharacterized protein from Coxiella burnetii (strain RSA 493 / Nine Mile phase I).